We begin with the raw amino-acid sequence, 33 residues long: Beta-amanitin proprotein (33 aa).

Positions 1 to 10 (MSDINATRLP) are excised as a propeptide. Residues 11–18 (IWGIGCDP) constitute a cross-link (cyclopeptide (Ile-Pro)). Positions 12–16 (WGIGC) form a cross-link, 2'-cysteinyl-6'-hydroxytryptophan sulfoxide (Trp-Cys). Positions 19 to 33 (CVGDEVTALLTRGEA) are excised as a propeptide.

This sequence belongs to the MSDIN fungal toxin family. Processed by the macrocyclase-peptidase enzyme POPB to yield a toxic cyclic decapeptide. POPB first removes 10 residues from the N-terminus. Conformational trapping of the remaining peptide forces the enzyme to release this intermediate rather than proceed to macrocyclization. The enzyme rebinds the remaining peptide in a different conformation and catalyzes macrocyclization of the N-terminal 8 residues.

Its function is as follows. Toxin belonging to the bicyclic octapeptides amatoxins that acts by binding non-competitively to RNA polymerase II and greatly slowing the elongation of transcripts from target promoters. This chain is Beta-amanitin proprotein, found in Amanita fuligineoides.